A 443-amino-acid chain; its full sequence is UDP-N-acetylmuramate--L-alanine ligase (443 aa).

110 to 116 (GAHGKTS) is an ATP binding site.

It belongs to the MurCDEF family.

It localises to the cytoplasm. It carries out the reaction UDP-N-acetyl-alpha-D-muramate + L-alanine + ATP = UDP-N-acetyl-alpha-D-muramoyl-L-alanine + ADP + phosphate + H(+). It functions in the pathway cell wall biogenesis; peptidoglycan biosynthesis. Its function is as follows. Cell wall formation. This chain is UDP-N-acetylmuramate--L-alanine ligase, found in Streptococcus agalactiae serotype V (strain ATCC BAA-611 / 2603 V/R).